A 130-amino-acid chain; its full sequence is MAENQYYGTGRRKNSAARVFIKPGNGKIVINQRSLEQYFGRETARMVVRQPLELVDMVEKLDLYITVKGGGISGQAGAIRHGITRALMEYDESLRSELRKAGFVTRDARQVERKKVGLRKARRRPQFSKR.

It belongs to the universal ribosomal protein uS9 family.

The sequence is that of Small ribosomal subunit protein uS9 from Shigella sonnei (strain Ss046).